Consider the following 542-residue polypeptide: Chondroitin sulfate N-acetylgalactosaminyltransferase 2 (542 aa).

Topologically, residues 1-13 are cytoplasmic; that stretch reads MSRRGSILHSRTQ. The chain crosses the membrane as a helical; Signal-anchor for type II membrane protein span at residues 14–34; sequence WLLLGLALLFSLVLFMYLLEC. At 35–542 the chain is on the lumenal side; the sequence is APQTDGNASL…AYRTNSETAG (508 aa). Residue Asn41 is glycosylated (N-linked (GlcNAc...) asparagine). A coiled-coil region spans residues 59–105; the sequence is ALLQEQEEHYQTRATSLKRQIAQLKQELQDMSEKMRALQERKKLGAN. Asn333 carries an N-linked (GlcNAc...) asparagine glycan. The a divalent metal cation site is built by Asp369 and His486.

This sequence belongs to the chondroitin N-acetylgalactosaminyltransferase family.

It localises to the golgi apparatus. The protein resides in the golgi stack membrane. The enzyme catalyses 3-O-(beta-D-GlcA-(1-&gt;3)-beta-D-Gal-(1-&gt;3)-beta-D-Gal-(1-&gt;4)-beta-D-Xyl)-L-seryl-[protein] + UDP-N-acetyl-alpha-D-galactosamine = 3-O-(beta-D-GalNAc-(1-&gt;4)-beta-D-GlcA-(1-&gt;3)-beta-D-Gal-(1-&gt;3)-beta-D-Gal-(1-&gt;4)-beta-D-Xyl)-L-seryl-[protein] + UDP + H(+). Its function is as follows. Transfers 1,4-N-acetylgalactosamine (GalNAc) from UDP-GalNAc to the non-reducing end of glucuronic acid (GlcUA). Required for addition of the first GalNAc to the core tetrasaccharide linker and for elongation of chondroitin chains. This chain is Chondroitin sulfate N-acetylgalactosaminyltransferase 2 (Csgalnact2), found in Mus musculus (Mouse).